Here is a 232-residue protein sequence, read N- to C-terminus: ATP-dependent dethiobiotin synthetase BioD (232 aa).

Residue 16 to 21 participates in ATP binding; that stretch reads GVGKTV. Threonine 20 is a binding site for Mg(2+). Lysine 41 is an active-site residue. Threonine 45 contributes to the substrate binding site. ATP is bound by residues aspartate 52, 111-114, 171-172, 200-202, and glutamate 207; these read EGIG, NQ, and PLS. Mg(2+) is bound by residues aspartate 52 and glutamate 111.

This sequence belongs to the dethiobiotin synthetase family. As to quaternary structure, homodimer. Requires Mg(2+) as cofactor.

Its subcellular location is the cytoplasm. It carries out the reaction (7R,8S)-7,8-diammoniononanoate + CO2 + ATP = (4R,5S)-dethiobiotin + ADP + phosphate + 3 H(+). The catalysed reaction is (7R,8S)-8-amino-7-(carboxyamino)nonanoate + ATP = (4R,5S)-dethiobiotin + ADP + phosphate + H(+). It functions in the pathway cofactor biosynthesis; biotin biosynthesis; biotin from 7,8-diaminononanoate: step 1/2. In terms of biological role, catalyzes a mechanistically unusual reaction, the ATP-dependent insertion of CO2 between the N7 and N8 nitrogen atoms of 7,8-diaminopelargonic acid (DAPA, also called 7,8-diammoniononanoate) to form a ureido ring. This archaea does not encode bioA (which catalyzes the formation of the precursor for this reaction in the cannonical pathway), instead it encodes bioU, which replaces bioA and also performs the first half of the cannonical BioD reaction. Thus in this archaea BioD has a different substrate. The chain is ATP-dependent dethiobiotin synthetase BioD from Haloferax mediterranei (strain ATCC 33500 / DSM 1411 / JCM 8866 / NBRC 14739 / NCIMB 2177 / R-4) (Halobacterium mediterranei).